The primary structure comprises 31 residues: Cytochrome b6-f complex subunit 6 (31 aa).

The helical transmembrane segment at 4–24 (LLSYFGFLFAILTLTSVLFIG) threads the bilayer.

Belongs to the PetL family. As to quaternary structure, the 4 large subunits of the cytochrome b6-f complex are cytochrome b6, subunit IV (17 kDa polypeptide, PetD), cytochrome f and the Rieske protein, while the 4 small subunits are PetG, PetL, PetM and PetN. The complex functions as a dimer.

The protein resides in the plastid. It localises to the chloroplast thylakoid membrane. Functionally, component of the cytochrome b6-f complex, which mediates electron transfer between photosystem II (PSII) and photosystem I (PSI), cyclic electron flow around PSI, and state transitions. PetL is important for photoautotrophic growth as well as for electron transfer efficiency and stability of the cytochrome b6-f complex. This Angiopteris evecta (Mule's foot fern) protein is Cytochrome b6-f complex subunit 6.